A 334-amino-acid chain; its full sequence is Ornithine carbamoyltransferase (334 aa).

Carbamoyl phosphate-binding positions include 57 to 60 (STRT), Gln-84, Arg-108, and 135 to 138 (HPTQ). L-ornithine-binding positions include Asn-169, Asp-233, and 237 to 238 (SM). Carbamoyl phosphate contacts are provided by residues 275–276 (CL) and Arg-320.

Belongs to the aspartate/ornithine carbamoyltransferase superfamily. OTCase family.

The protein resides in the cytoplasm. The enzyme catalyses carbamoyl phosphate + L-ornithine = L-citrulline + phosphate + H(+). The protein operates within amino-acid biosynthesis; L-arginine biosynthesis; L-arginine from L-ornithine and carbamoyl phosphate: step 1/3. Functionally, reversibly catalyzes the transfer of the carbamoyl group from carbamoyl phosphate (CP) to the N(epsilon) atom of ornithine (ORN) to produce L-citrulline. The protein is Ornithine carbamoyltransferase of Aliivibrio fischeri (strain ATCC 700601 / ES114) (Vibrio fischeri).